The sequence spans 196 residues: Probable malonic semialdehyde reductase RutE (196 aa).

The protein belongs to the nitroreductase family. HadB/RutE subfamily. FMN is required as a cofactor.

It catalyses the reaction 3-hydroxypropanoate + NADP(+) = 3-oxopropanoate + NADPH + H(+). In terms of biological role, may reduce toxic product malonic semialdehyde to 3-hydroxypropionic acid, which is excreted. The chain is Probable malonic semialdehyde reductase RutE from Escherichia coli (strain K12 / MC4100 / BW2952).